Here is a 116-residue protein sequence, read N- to C-terminus: NADH-ubiquinone oxidoreductase chain 3 (116 aa).

Transmembrane regions (helical) follow at residues 3–23 (LITT…TISF), 56–76 (FFLI…LLPL), and 87–107 (LTLI…IYEW).

Belongs to the complex I subunit 3 family.

Its subcellular location is the mitochondrion membrane. It carries out the reaction a ubiquinone + NADH + 5 H(+)(in) = a ubiquinol + NAD(+) + 4 H(+)(out). Its function is as follows. Core subunit of the mitochondrial membrane respiratory chain NADH dehydrogenase (Complex I) that is believed to belong to the minimal assembly required for catalysis. Complex I functions in the transfer of electrons from NADH to the respiratory chain. The immediate electron acceptor for the enzyme is believed to be ubiquinone. The polypeptide is NADH-ubiquinone oxidoreductase chain 3 (MT-ND3) (Oncorhynchus tshawytscha (Chinook salmon)).